The chain runs to 415 residues: MPPLYRRSCITCVQSKRKCDQGLPKCQRCLAKNIHCEYNPRYPNRRRQTTERNVDENVSLVEPIAEEPSRGCQLQRSPARPTSPTHSPHANDIFFNFANDPFNLESIPQDNFLNSTIFEDVVTQQAPNDTERITSDTTAQARVEFAAKKLSVIPKIFSQQGQTMFIHRQLFQDRAPPALQDALSACALYCLKSTENQTLVFRNLEHKRKQLISSIDPLLASKLDLLEALQALVLYQIISLFDGDIRLRAQAEADEPVLLMWAAQLTLRTPQFQPPLGLSNPQSLAGSASMDWGRWLIEESSRRTLITASMLKGVYSFVKLGYDTVPDMRMSFTAQAVLWNSQSEISWRRAYKEKERLEIQVTHWDETIAKAKANDLEELGVLIMVMLKGTGATGEWLGHSQNIRYGLEEAYYGSV.

The segment at residues 9 to 36 (CITCVQSKRKCDQGLPKCQRCLAKNIHC) is a DNA-binding region (zn(2)-C6 fungal-type). Residues 65–91 (AEEPSRGCQLQRSPARPTSPTHSPHAN) form a disordered region. Polar residues predominate over residues 72–88 (CQLQRSPARPTSPTHSP).

The protein resides in the nucleus. Transcription factor that regulates expression of the gene cluster that mediates the biosynthesis of Griseofulvin, an important antifungal drug that has been in use for a long time for treating dermatophyte infections. This chain is Transcription factor gsfR2, found in Penicillium aethiopicum.